A 431-amino-acid chain; its full sequence is UDP-N-acetylglucosamine 1-carboxyvinyltransferase (431 aa).

22–23 (KN) is a binding site for phosphoenolpyruvate. R102 is a binding site for UDP-N-acetyl-alpha-D-glucosamine. Residue C126 is the Proton donor of the active site. C126 is subject to 2-(S-cysteinyl)pyruvic acid O-phosphothioketal. Positions 318 and 340 each coordinate UDP-N-acetyl-alpha-D-glucosamine.

Belongs to the EPSP synthase family. MurA subfamily.

Its subcellular location is the cytoplasm. It catalyses the reaction phosphoenolpyruvate + UDP-N-acetyl-alpha-D-glucosamine = UDP-N-acetyl-3-O-(1-carboxyvinyl)-alpha-D-glucosamine + phosphate. The protein operates within cell wall biogenesis; peptidoglycan biosynthesis. Cell wall formation. Adds enolpyruvyl to UDP-N-acetylglucosamine. In Bartonella henselae (strain ATCC 49882 / DSM 28221 / CCUG 30454 / Houston 1) (Rochalimaea henselae), this protein is UDP-N-acetylglucosamine 1-carboxyvinyltransferase.